The chain runs to 412 residues: Flap endonuclease 1-B (412 aa).

Positions 1–105 are N-domain; the sequence is MGIKGLTKLL…KELAKRSLKR (105 aa). Aspartate 34 is a binding site for Mg(2+). A DNA-binding site is contributed by arginine 71. 5 residues coordinate Mg(2+): aspartate 87, glutamate 159, glutamate 161, aspartate 180, and aspartate 182. The tract at residues 123-254 is I-domain; the sequence is LIEKFSKRTV…QRALKLIRQH (132 aa). Glutamate 159 serves as a coordination point for DNA. The DNA site is built by glycine 232 and aspartate 234. Mg(2+) is bound at residue aspartate 234.

It belongs to the XPG/RAD2 endonuclease family. FEN1 subfamily. As to quaternary structure, interacts with PCNA. Three molecules of FEN1 bind to one PCNA trimer with each molecule binding to one PCNA monomer. PCNA stimulates the nuclease activity without altering cleavage specificity. It depends on Mg(2+) as a cofactor. In terms of processing, phosphorylated. Phosphorylation upon DNA damage induces relocalization to the nuclear plasma.

The protein resides in the nucleus. It localises to the nucleolus. Its subcellular location is the nucleoplasm. It is found in the mitochondrion. Its function is as follows. Structure-specific nuclease with 5'-flap endonuclease and 5'-3' exonuclease activities involved in DNA replication and repair. During DNA replication, cleaves the 5'-overhanging flap structure that is generated by displacement synthesis when DNA polymerase encounters the 5'-end of a downstream Okazaki fragment. It enters the flap from the 5'-end and then tracks to cleave the flap base, leaving a nick for ligation. Also involved in the long patch base excision repair (LP-BER) pathway, by cleaving within the apurinic/apyrimidinic (AP) site-terminated flap. Acts as a genome stabilization factor that prevents flaps from equilibrating into structures that lead to duplications and deletions. Also possesses 5'-3' exonuclease activity on nicked or gapped double-stranded DNA, and exhibits RNase H activity. Also involved in replication and repair of rDNA and in repairing mitochondrial DNA. The protein is Flap endonuclease 1-B of Oryza sativa subsp. indica (Rice).